The chain runs to 341 residues: MFGLIGHLTSLEQARDVSRRMGYDEYADQGLEFWSSAPPQIVDEITVTSATGKVIHGRYIESCFLPEMLAARRFKTATRKVLNAMSHAQKHGIDISALGGFTSIIFENFDLASLRQVRDTTLEFERFTTGNTHTAYVICRQVEAAAKTLGIDITQATVAVVGATGDIGSAVCRWLDLKLGVGDLILTARNQERLDNLQAELGRGKILPLEAALPEADFIVWVASMPQGVVIDPATLKQPCVLIDGGYPKNLGSKVQGEGIYVLNGGVVEHCFDIDWQIMSAAEMARPERQMFACFAEAMLLEFEGWHTNFSWGRNQITIEKMEAIGEASVRHGFQPLALAI.

The protein belongs to the short-chain dehydrogenases/reductases (SDR) family. A divalent metal cation serves as cofactor.

It carries out the reaction a long-chain fatty aldehyde + holo-[ACP] + NADP(+) = a long-chain fatty acyl-[ACP] + NADPH + H(+). The enzyme catalyses a long-chain fatty aldehyde + holo-[ACP] + NAD(+) = a long-chain fatty acyl-[ACP] + NADH + H(+). Functionally, catalyzes the NADP-dependent reduction of long-chain acyl-ACP to the corresponding fatty aldehyde. Involved in the biosynthesis of alkanes, mainly heptadecane and pentadecane, by producing the fatty aldehydes used by aldehyde decarbonylase. In Synechococcus elongatus (strain ATCC 33912 / PCC 7942 / FACHB-805) (Anacystis nidulans R2), this protein is Long-chain acyl-[acyl-carrier-protein] reductase.